The chain runs to 1121 residues: Phosphatidylinositol 4-kinase beta 1 (1121 aa).

The PIK helical domain maps to 1–143 (MPMGRFLSLV…SRIQEKCQIA (143 aa)). The segment covering 187–207 (PPTQKSLSFSPSPGTNVQDDG) has biased composition (polar residues). Residues 187-210 (PPTQKSLSFSPSPGTNVQDDGSQL) form a disordered region. 9 repeat units span residues 212–231 (AEDN…RDAL), 244–263 (SEKE…EGDE), 266–285 (PNSE…EDED), 288–306 (NSSE…ESEE), 309–328 (SSSD…DEEE), 331–350 (ANSD…EDEE), 353–372 (PNSE…EDDK), 380–398 (EDKD…DDKR), and 420–438 (DERE…DDKK). Residues 212 to 508 (AEDNKIFKKL…FRDRDQSVED (297 aa)) form an 11 X 20 AA approximate repeats (PPC) region. Disordered regions lie at residues 343-421 (ESKN…EEDE), 435-489 (DDKK…ESSP), 506-544 (VEDS…NTAS), and 794-825 (AAAA…NGGM). Composition is skewed to basic and acidic residues over residues 358 to 376 (FFKK…VPKE), 383 to 405 (DGFL…EKNE), 412 to 421 (ADKKSGEEDE), and 435 to 445 (DDKKDIVKVDD). The segment covering 446-455 (GNESEGDESP) has biased composition (acidic residues). 2 positions are modified to phosphoserine: Ser449 and Ser454. A run of 2 repeats spans residues 454 to 472 (SPEF…EDAK) and 489 to 508 (PGTE…SVED). The span at 466–475 (IHPEDAKPTS) shows a compositional bias: basic and acidic residues. A compositionally biased stretch (polar residues) spans 476–489 (ENENSSNGLVESSP). The PI3K/PI4K catalytic domain occupies 835-1106 (ELWEGKRDRI…LISSSLDAWR (272 aa)). Residues 841–847 (RDRIRKA) are G-loop. A catalytic loop region spans residues 969-977 (QVKDRHNGN). The interval 988–1012 (HIDFGFMLSNSPGGVNFESAPFKLT) is activation loop.

Belongs to the PI3/PI4-kinase family. Type III PI4K subfamily. As to quaternary structure, interacts with AHK2, CBL1 and RABA4D. As to expression, expressed constitutively in leaves, roots, flowers, and stems.

It localises to the cell membrane. The protein localises to the golgi apparatus. Its subcellular location is the trans-Golgi network. The protein resides in the cytoplasmic vesicle membrane. The enzyme catalyses a 1,2-diacyl-sn-glycero-3-phospho-(1D-myo-inositol) + ATP = a 1,2-diacyl-sn-glycero-3-phospho-(1D-myo-inositol 4-phosphate) + ADP + H(+). Its activity is regulated as follows. Stimulated by phosphatidylinositol 4-phosphate (PtdIns4P). Slightly repressed by phosphatidyl-choline (PtdCho), wortmannin and adenosine. Its function is as follows. Acts on phosphatidylinositol (PtdIns) in the first committed step in the production of the second messenger inositol-1,4,5-trisphosphate. Necessary for proper organization of the trans-Golgi network (TGN) and post-Golgi secretion in root hairs. Together with PI4KB2, required during polarized root hair expansion and pollen tube elongation. Functions redundantly with PI4KB2 upstream of the cold response phosphoinositide-dependent phospholipase C (PI-PLC) pathway. This chain is Phosphatidylinositol 4-kinase beta 1, found in Arabidopsis thaliana (Mouse-ear cress).